Consider the following 264-residue polypeptide: ATP synthase subunit a (264 aa).

The next 6 membrane-spanning stretches (helical) occupy residues 32–52 (IDSL…FHSV), 89–109 (VIAP…FMDM), 134–154 (DLNI…YYSI), 177–197 (IPVN…SLAL), 208–228 (LIFI…TLGV), and 235–255 (LIFH…LTIV).

The protein belongs to the ATPase A chain family. As to quaternary structure, F-type ATPases have 2 components, CF(1) - the catalytic core - and CF(0) - the membrane proton channel. CF(1) has five subunits: alpha(3), beta(3), gamma(1), delta(1), epsilon(1). CF(0) has three main subunits: a(1), b(2) and c(9-12). The alpha and beta chains form an alternating ring which encloses part of the gamma chain. CF(1) is attached to CF(0) by a central stalk formed by the gamma and epsilon chains, while a peripheral stalk is formed by the delta and b chains.

It localises to the cell inner membrane. In terms of biological role, key component of the proton channel; it plays a direct role in the translocation of protons across the membrane. The protein is ATP synthase subunit a of Shewanella piezotolerans (strain WP3 / JCM 13877).